The following is a 1178-amino-acid chain: Pesticidal crystal protein Cry1Ac (1178 aa).

This sequence belongs to the delta endotoxin family.

Promotes colloidosmotic lysis by binding to the midgut epithelial cells of many lepidopteran larvae. The sequence is that of Pesticidal crystal protein Cry1Ac (cry1Ac) from Bacillus thuringiensis subsp. kurstaki.